The primary structure comprises 774 residues: Probable E3 ubiquitin-protein ligase HECTD2 (774 aa).

The disordered stretch occupies residues 1–51; that stretch reads MSEAARDLSPGAPPAVAAAAPEERKGKEPEREKLPPIVTAGAAAGLDRGSK. Residue serine 9 is modified to Phosphoserine. The segment covering 21–34 has biased composition (basic and acidic residues); it reads PEERKGKEPEREKL. One can recognise an HECT domain in the interval 435–774; it reads KRADLKKKLK…ISNSEGFGLE (340 aa). Cysteine 742 serves as the catalytic Glycyl thioester intermediate.

It carries out the reaction S-ubiquitinyl-[E2 ubiquitin-conjugating enzyme]-L-cysteine + [acceptor protein]-L-lysine = [E2 ubiquitin-conjugating enzyme]-L-cysteine + N(6)-ubiquitinyl-[acceptor protein]-L-lysine.. Its pathway is protein modification; protein ubiquitination. Its function is as follows. E3 ubiquitin-protein ligase which accepts ubiquitin from an E2 ubiquitin-conjugating enzyme in the form of a thioester and then directly transfers the ubiquitin to targeted substrates. This chain is Probable E3 ubiquitin-protein ligase HECTD2 (Hectd2), found in Mus musculus (Mouse).